We begin with the raw amino-acid sequence, 617 residues long: Protein fem-1 homolog C (617 aa).

Methionine 1 is modified (N-acetylmethionine). ANK repeat units lie at residues 2-31 (DLKT…KAEV), 40-70 (NGAT…SIEV), 82-111 (EGAP…SVNN), 115-144 (TNST…DLEV), 148-177 (HGHT…DVNR), 181-210 (KGNT…KMEK), and 213-242 (YGMT…TSKT). TPR repeat units follow at residues 245–279 (INAL…RYSD) and 338–371 (SYYI…QQSN). ANK repeat units lie at residues 481–523 (NNFS…DVNV) and 527–556 (DDNS…HFDA).

Belongs to the fem-1 family. Component of a Cul2-RING (CRL2) E3 ubiquitin-protein ligase complex, also named ECS (Elongin BC-CUL2/5-SOCS-box protein) complex, composed of CUL2, Elongin BC (ELOB and ELOC), RBX1 and substrate-specific adapter FEM1C. Widely expressed. Expressed at higher level in testis.

It participates in protein modification; protein ubiquitination. Functionally, substrate-recognition component of a Cul2-RING (CRL2) E3 ubiquitin-protein ligase complex of the DesCEND (destruction via C-end degrons) pathway, which recognizes a C-degron located at the extreme C terminus of target proteins, leading to their ubiquitination and degradation. The C-degron recognized by the DesCEND pathway is usually a motif of less than ten residues and can be present in full-length proteins, truncated proteins or proteolytically cleaved forms. The CRL2(FEM1C) complex specifically recognizes proteins with an arginine at the C-terminus: recognizes and binds proteins ending with -Lys/Arg-Xaa-Arg and -Lys/Arg-Xaa-Xaa-Arg C-degrons, such as SIL1 or OR51B2, leading to their ubiquitination and degradation. The CRL2(FEM1C) complex mediates ubiquitination and degradation of truncated MSRB1/SEPX1 selenoproteins produced by failed UGA/Sec decoding. Promotes ubiquitination and degradation of SLBP. This is Protein fem-1 homolog C from Mus musculus (Mouse).